Here is an 855-residue protein sequence, read N- to C-terminus: Suppressor of tumorigenicity 14 protein (855 aa).

The segment at 1-20 (MGSDRARKGGGGPKDFGAGL) is disordered. The Cytoplasmic segment spans residues 1 to 55 (MGSDRARKGGGGPKDFGAGLKYNSRHEKVNGLEEGVEFLPVNNVKKVEKHGPGRW). The helical; Signal-anchor for type II membrane protein transmembrane segment at 56 to 76 (VVLAAVLIGLLLVLLGIGFLV) threads the bilayer. The Extracellular portion of the chain corresponds to 77-855 (WHLQYRDVRV…RDWIKENTGV (779 aa)). Residues 86-203 (VQKVFNGYMR…TSVVAFPTDS (118 aa)) form the SEA domain. Asparagine 109 is a glycosylation site (N-linked (GlcNAc...) asparagine). Cysteines 214 and 244 form a disulfide. CUB domains lie at 214 to 334 (CSFG…FFQL) and 340 to 447 (CGGR…YLSY). Residue asparagine 302 is glycosylated (N-linked (GlcNAc...) asparagine). Intrachain disulfides connect cysteine 340/cysteine 366, cysteine 397/cysteine 410, cysteine 453/cysteine 464, cysteine 459/cysteine 477, cysteine 471/cysteine 486, cysteine 488/cysteine 501, cysteine 496/cysteine 514, cysteine 508/cysteine 523, cysteine 525/cysteine 537, cysteine 532/cysteine 550, cysteine 544/cysteine 559, cysteine 567/cysteine 579, cysteine 574/cysteine 593, cysteine 587/cysteine 602, and cysteine 641/cysteine 657. 4 consecutive LDL-receptor class A domains span residues 452–487 (PCPG…LNCS), 487–524 (SCDA…QGCS), 524–560 (SCPA…ASCP), and 566–603 (TCTK…KDCD). An N-linked (GlcNAc...) asparagine glycan is attached at asparagine 485. The 240-residue stretch at 615-854 (VVGGTDADEG…FRDWIKENTG (240 aa)) folds into the Peptidase S1 domain. Residues histidine 656 and aspartate 711 each act as charge relay system in the active site. Residue asparagine 772 is glycosylated (N-linked (GlcNAc...) asparagine). 2 disulfide bridges follow: cysteine 776/cysteine 790 and cysteine 801/cysteine 830. The active-site Charge relay system is the serine 805.

This sequence belongs to the peptidase S1 family. In terms of assembly, interacts with CDCP1. May interact with TMEFF1. Interacts with iripin-3, a serine protease inhibitor from Ixodes ricinus saliva. Interacts with iripin-1, a serine protease inhibitor from Ixodes ricinus saliva.

Its subcellular location is the membrane. The enzyme catalyses Cleaves various synthetic substrates with Arg or Lys at the P1 position and prefers small side-chain amino acids, such as Ala and Gly, at the P2 position.. Functionally, exhibits trypsin-like activity as defined by cleavage of synthetic substrates with Arg or Lys as the P1 site. Involved in the terminal differentiation of keratinocytes through prostasin (PRSS8) activation and filaggrin (FLG) processing. Proteolytically cleaves and therefore activates TMPRSS13. This chain is Suppressor of tumorigenicity 14 protein (ST14), found in Homo sapiens (Human).